We begin with the raw amino-acid sequence, 172 residues long: Centrin-1 (172 aa).

A disordered region spans residues 1-30 (MASSYRKPTVASTSQKRKVGPKPELTEEQK). 4 EF-hand domains span residues 28–63 (EQKQ…LGFE), 64–99 (PRKE…KMAE), 101–136 (DTKE…LGEN), and 137–172 (LTDE…TNLY). Residues Asp41, Asp43, Ser45, Thr47, and Glu52 each coordinate Ca(2+). 5 residues coordinate Ca(2+): Asp150, Asp152, Asp154, Glu156, and Glu161.

The protein belongs to the centrin family. In terms of assembly, monomer. Interacts with CIMAP3. Interacts with USP49.

It localises to the cytoplasm. The protein localises to the cytoskeleton. The protein resides in the microtubule organizing center. It is found in the centrosome. Its function is as follows. Plays a fundamental role in microtubule-organizing center structure and function. Plays a role in sperm cilia formation. This chain is Centrin-1 (CETN1), found in Bos taurus (Bovine).